The following is a 438-amino-acid chain: Coenzyme A disulfide reductase (438 aa).

Position 8–33 (G8–E33) interacts with FAD. Residues T15, Q19, R22, S39, and N42 each coordinate substrate. The active-site Nucleophile is C43. Catalysis depends on C43, which acts as the Redox-active. K71 serves as a coordination point for substrate. V151 to N166 provides a ligand contact to NADP(+). Position 267–277 (T267–D277) interacts with FAD. A substrate-binding site is contributed by H299. Position 419 (Y419) interacts with FAD. Substrate is bound at residue K427.

It belongs to the class-III pyridine nucleotide-disulfide oxidoreductase family. Homodimer. Requires FAD as cofactor.

It carries out the reaction NADP(+) + 2 CoA = CoA-disulfide + NADPH + H(+). Its function is as follows. Catalyzes specifically the NADPH-dependent reduction of coenzyme A disulfide. The polypeptide is Coenzyme A disulfide reductase (Staphylococcus aureus (strain USA300)).